The primary structure comprises 302 residues: Genome polyprotein (302 aa).

Positions 28–46 (ENLDTGKDSKKDTSGKGDK) are enriched in basic and acidic residues. The disordered stretch occupies residues 28–72 (ENLDTGKDSKKDTSGKGDKPQNSQTGQGSKEQTKIGTVSKDVNVG). Polar residues predominate over residues 47 to 63 (PQNSQTGQGSKEQTKIG).

Belongs to the potyviridae genome polyprotein family. Post-translationally, genome polyprotein of potyviruses undergoes post-translational proteolytic processing by the main proteinase NIa-pro resulting in the production of at least ten individual proteins. The P1 proteinase and the HC-pro cleave only their respective C-termini autocatalytically. 6K1 is essential for proper proteolytic separation of P3 from CI.

It is found in the virion. The catalysed reaction is RNA(n) + a ribonucleoside 5'-triphosphate = RNA(n+1) + diphosphate. In terms of biological role, an RNA-dependent RNA polymerase that plays an essential role in the virus replication. Its function is as follows. Involved in aphid transmission, cell-to-cell and systemis movement, encapsidation of the viral RNA and in the regulation of viral RNA amplification. The polypeptide is Genome polyprotein (Watermelon mosaic virus II (isolate Australia)).